The following is a 910-amino-acid chain: Eukaryotic translation initiation factor 3 subunit C (910 aa).

Positions 1–21 (MSRFFANGSDSESESSEDEIQ) are disordered. Over residues 11–20 (SESESSEDEI) the composition is skewed to acidic residues. 4 positions are modified to phosphoserine: Ser-34, Ser-165, Ser-176, and Ser-185. The disordered stretch occupies residues 157–279 (FREAPDQESE…IRKRAEDDED (123 aa)). Residues 162-186 (DQESEAEDEVVALESDGGDAGDDSD) are compositionally biased toward acidic residues. A compositionally biased stretch (low complexity) spans 188–207 (GVKPTEAAPKAVKTAPAKAA). A compositionally biased stretch (acidic residues) spans 209 to 235 (ADDDDSDDSIDWDSDSESETESSDDEN). Basic and acidic residues predominate over residues 240–268 (MRERFLKRTTEKEEKDDDKRKDKRKEQKI). A PCI domain is found at 639 to 815 (FHMHINLELL…ETVVMHRSEP (177 aa)). The disordered stretch occupies residues 847-910 (FFQRGNMGNR…QQQVQTIDEE (64 aa)). A compositionally biased stretch (low complexity) spans 862-874 (NRNQNNQGGNWLG). A compositionally biased stretch (basic residues) spans 882 to 891 (RNRNQRGHHK). The span at 895 to 910 (DRQQQQQQQVQTIDEE) shows a compositional bias: low complexity.

The protein belongs to the eIF-3 subunit C family. In terms of assembly, component of the eukaryotic translation initiation factor 3 (eIF-3) complex. The eIF-3 complex interacts with pix.

It localises to the cytoplasm. In terms of biological role, component of the eukaryotic translation initiation factor 3 (eIF-3) complex, which is involved in protein synthesis of a specialized repertoire of mRNAs and, together with other initiation factors, stimulates binding of mRNA and methionyl-tRNAi to the 40S ribosome. The eIF-3 complex specifically targets and initiates translation of a subset of mRNAs involved in cell proliferation. This is Eukaryotic translation initiation factor 3 subunit C from Drosophila erecta (Fruit fly).